The primary structure comprises 200 residues: LHFPL tetraspan subfamily member 6 protein (200 aa).

The signal sequence occupies residues Met-1–Ala-21. A run of 3 helical transmembrane segments spans residues Ile-84–Leu-104, Gly-123–Trp-143, and Ile-166–Trp-186.

This sequence belongs to the LHFP family. Pancreas, kidney, skeletal muscle, liver, lung brain, heart, colon, small intestine, uterus, testis, prostate, thymus, spleen and placenta.

It is found in the membrane. The chain is LHFPL tetraspan subfamily member 6 protein from Homo sapiens (Human).